The chain runs to 155 residues: Anaerobic ribonucleoside-triphosphate reductase-activating protein (155 aa).

[4Fe-4S] cluster contacts are provided by cysteine 26, cysteine 30, and cysteine 33. Residues 32–34 (GCY) and glycine 74 contribute to the S-adenosyl-L-methionine site.

This sequence belongs to the organic radical-activating enzymes family. In terms of assembly, forms a tetramer composed of two NrdD and two NrdG subunits. Requires [4Fe-4S] cluster as cofactor.

Its subcellular location is the cytoplasm. The enzyme catalyses glycyl-[protein] + reduced [flavodoxin] + S-adenosyl-L-methionine = glycin-2-yl radical-[protein] + semiquinone [flavodoxin] + 5'-deoxyadenosine + L-methionine + H(+). Its function is as follows. Activation of anaerobic ribonucleoside-triphosphate reductase under anaerobic conditions by generation of an organic free radical, using S-adenosylmethionine and reduced flavodoxin as cosubstrates to produce 5'-deoxy-adenosine. This chain is Anaerobic ribonucleoside-triphosphate reductase-activating protein (nrdG), found in Vibrio cholerae serotype O1 (strain ATCC 39315 / El Tor Inaba N16961).